We begin with the raw amino-acid sequence, 68 residues long: Large ribosomal subunit protein bL35 (68 aa).

The protein belongs to the bacterial ribosomal protein bL35 family.

This is Large ribosomal subunit protein bL35 from Rickettsia canadensis (strain McKiel).